The primary structure comprises 244 residues: Probable Ni/Fe-hydrogenase B-type cytochrome subunit (244 aa).

Helical transmembrane passes span 39-59, 73-93, 150-171, and 204-221; these read LWHWVNALAIVVLAVTGFFIG, FLMGYIRFAHFVAAYIFAIGM, FAMFFIFFLSSVFMILTGFAMY, and LGMWFIVVFVIVHVYAAI.

The protein belongs to the HupC/HyaC/HydC family.

Its subcellular location is the cell membrane. In terms of biological role, probable b-type cytochrome. This chain is Probable Ni/Fe-hydrogenase B-type cytochrome subunit (hoxZ), found in Cupriavidus necator (strain ATCC 17699 / DSM 428 / KCTC 22496 / NCIMB 10442 / H16 / Stanier 337) (Ralstonia eutropha).